Consider the following 295-residue polypeptide: MFKQYLQVTKPGIIFGNLISVIGGFLLASKGHIDYPLFVWTLLGVSLVVASGCVFNNYIDRDIDRKMERTKNRVLVKGLISPEASLVYATLLGIAGFMLLWFGANPLACWLGVMGFVVYVGVYSLYMKRHSVYGTLIGSLSGAAPPVIGYCAVTGDFDSGAAILLAIFSLWQMPHSYAIAIFRFKDYQAANIPVLPVVKGISVAKNHITLYIVAFAVATLMLSLGGYAGYKYLVVAAAVSVWWLGMALRGYKVADDKVWARKLFVFSIVAITALSVMMSVDFMVPDSHSLLAYVR.

9 helical membrane-spanning segments follow: residues 8 to 28 (VTKP…FLLA), 35 to 55 (YPLF…GCVF), 84 to 104 (ASLV…WFGA), 107 to 127 (LACW…SLYM), 132 to 152 (VYGT…GYCA), 162 to 182 (AILL…IAIF), 208 to 228 (ITLY…GGYA), 233 to 253 (LVVA…GYKV), and 264 to 284 (FVFS…DFMV).

Belongs to the UbiA prenyltransferase family. Protoheme IX farnesyltransferase subfamily.

Its subcellular location is the cell inner membrane. The catalysed reaction is heme b + (2E,6E)-farnesyl diphosphate + H2O = Fe(II)-heme o + diphosphate. It participates in porphyrin-containing compound metabolism; heme O biosynthesis; heme O from protoheme: step 1/1. Converts heme B (protoheme IX) to heme O by substitution of the vinyl group on carbon 2 of heme B porphyrin ring with a hydroxyethyl farnesyl side group. This Klebsiella pneumoniae subsp. pneumoniae (strain ATCC 700721 / MGH 78578) protein is Protoheme IX farnesyltransferase.